A 165-amino-acid polypeptide reads, in one-letter code: MAESFSFDVVSDFDRQELVNTLDQVKREISQRYDLKGTDTSVELDKENIFIITNSELTLNAVNDIIRQKAIKRNLSLKIFDYGETEMVSGNRIKQTILLKQGIKQEIAKKISKNIRDQIKKINVSINGETLRVASKSKNDLQLAIKLVSELEESLNIPLKANNFR.

Belongs to the YajQ family.

In terms of biological role, nucleotide-binding protein. The polypeptide is Nucleotide-binding protein A9601_05361 (Prochlorococcus marinus (strain AS9601)).